We begin with the raw amino-acid sequence, 207 residues long: Probable molybdenum cofactor guanylyltransferase (207 aa).

GTP is bound by residues 9–11 (LAG), lysine 21, and aspartate 97. Aspartate 97 serves as a coordination point for Mg(2+).

It belongs to the MobA family. Requires Mg(2+) as cofactor.

It localises to the cytoplasm. It catalyses the reaction Mo-molybdopterin + GTP + H(+) = Mo-molybdopterin guanine dinucleotide + diphosphate. Its function is as follows. Transfers a GMP moiety from GTP to Mo-molybdopterin (Mo-MPT) cofactor (Moco or molybdenum cofactor) to form Mo-molybdopterin guanine dinucleotide (Mo-MGD) cofactor. The chain is Probable molybdenum cofactor guanylyltransferase from Nostoc sp. (strain PCC 7120 / SAG 25.82 / UTEX 2576).